Here is a 304-residue protein sequence, read N- to C-terminus: Mitochondrial glycine transporter (304 aa).

Solcar repeat units follow at residues 25–114, 121–205, and 215–299; these read HPVI…LKQY, PTAL…TKNI, and LIPI…MMAK. 6 helical membrane-spanning segments follow: residues 31 to 56, 89 to 115, 127 to 152, 180 to 203, 219 to 245, and 274 to 292; these read FLCGSISGTCSTLLFQPLDLLKTRLQ, GMSPSIVRCVPGVGIYFGTLYSLKQYF, VMLGVGSRSVAGVCMSPITVIKTRYE, GLTATLLRDAPFSGIYLMFYNQTK, TNFSCGIFAGILASLVTQPADVIKTHM, and GGIPRALRRTLMAAMAWTV.

It belongs to the mitochondrial carrier (TC 2.A.29) family. SLC25A38 subfamily. As to expression, preferentially expressed in erythroid cells.

It is found in the mitochondrion inner membrane. The catalysed reaction is glycine(in) = glycine(out). Its function is as follows. Mitochondrial glycine transporter that imports glycine into the mitochondrial matrix. Plays an important role in providing glycine for the first enzymatic step in heme biosynthesis, the condensation of glycine with succinyl-CoA to produce 5-aminolevulinate (ALA) in the mitochondrial matrix. Required during erythropoiesis. Plays a role as pro-apoptotic protein that induces caspase-dependent apoptosis. The protein is Mitochondrial glycine transporter of Homo sapiens (Human).